A 543-amino-acid polypeptide reads, in one-letter code: CTP synthase (543 aa).

Residues 1–265 (MTRYIFVTGG…DDIVVERFGL (265 aa)) are amidoligase domain. Ser-13 lines the CTP pocket. Residue Ser-13 coordinates UTP. ATP-binding positions include 14 to 19 (SLGKGI) and Asp-71. Positions 71 and 139 each coordinate Mg(2+). Residues 146 to 148 (DIE), 186 to 191 (KTKPTQ), and Lys-222 each bind CTP. UTP-binding positions include 186–191 (KTKPTQ) and Lys-222. A Glutamine amidotransferase type-1 domain is found at 290 to 541 (TIAMVGKYME…VNAALAQKAR (252 aa)). L-glutamine is bound at residue Gly-351. Cys-378 serves as the catalytic Nucleophile; for glutamine hydrolysis. Residues 379–382 (LGMQ), Glu-402, and Arg-469 contribute to the L-glutamine site. Catalysis depends on residues His-514 and Glu-516.

Belongs to the CTP synthase family. Homotetramer.

It catalyses the reaction UTP + L-glutamine + ATP + H2O = CTP + L-glutamate + ADP + phosphate + 2 H(+). It carries out the reaction L-glutamine + H2O = L-glutamate + NH4(+). The enzyme catalyses UTP + NH4(+) + ATP = CTP + ADP + phosphate + 2 H(+). It functions in the pathway pyrimidine metabolism; CTP biosynthesis via de novo pathway; CTP from UDP: step 2/2. Allosterically activated by GTP, when glutamine is the substrate; GTP has no effect on the reaction when ammonia is the substrate. The allosteric effector GTP functions by stabilizing the protein conformation that binds the tetrahedral intermediate(s) formed during glutamine hydrolysis. Inhibited by the product CTP, via allosteric rather than competitive inhibition. In terms of biological role, catalyzes the ATP-dependent amination of UTP to CTP with either L-glutamine or ammonia as the source of nitrogen. Regulates intracellular CTP levels through interactions with the four ribonucleotide triphosphates. In Azotobacter vinelandii (strain DJ / ATCC BAA-1303), this protein is CTP synthase.